We begin with the raw amino-acid sequence, 376 residues long: UDP-N-acetylglucosamine 2-epimerase (376 aa).

Residues Arg-10, Lys-15, Asp-95, Glu-117, His-213, Gln-271, Phe-276, 290 to 292, Glu-296, and Arg-313 each bind substrate; that span reads SGG.

Belongs to the UDP-N-acetylglucosamine 2-epimerase family. In terms of assembly, homodimer.

The protein localises to the cytoplasm. It carries out the reaction UDP-N-acetyl-alpha-D-glucosamine = UDP-N-acetyl-alpha-D-mannosamine. It participates in bacterial outer membrane biogenesis; enterobacterial common antigen biosynthesis. Its function is as follows. Catalyzes the reversible epimerization at C-2 of UDP-N-acetylglucosamine (UDP-GlcNAc) and thereby provides bacteria with UDP-N-acetylmannosamine (UDP-ManNAc), the activated donor of ManNAc residues. This Yersinia pestis protein is UDP-N-acetylglucosamine 2-epimerase.